Reading from the N-terminus, the 381-residue chain is Spindlin interactor and repressor of chromatin-binding protein (381 aa).

A disordered region spans residues 42–73; that stretch reads RVTQQEKTPPPRPSPLEAGSDGCEEPKQQVSW. Lysine 48 is covalently cross-linked (Glycyl lysine isopeptide (Lys-Gly) (interchain with G-Cter in SUMO2)). Serine 121 and serine 148 each carry phosphoserine. 3 disordered regions span residues 144 to 264, 283 to 320, and 339 to 381; these read AEQP…EVRH, QLRG…LRGT, and LQDW…GNGV. Residues lysine 189 and lysine 220 each participate in a glycyl lysine isopeptide (Lys-Gly) (interchain with G-Cter in SUMO2) cross-link. The segment covering 218–228 has biased composition (basic and acidic residues); it reads RWKEPPGEEPV. 2 positions are modified to phosphoserine: serine 248 and serine 251. A compositionally biased stretch (basic and acidic residues) spans 287 to 299; sequence PDSKDSPKDREVA. Residues lysine 290 and lysine 294 each participate in a glycyl lysine isopeptide (Lys-Gly) (interchain with G-Cter in SUMO2) cross-link. A phosphoserine mark is found at serine 308 and serine 310. A Glycyl lysine isopeptide (Lys-Gly) (interchain with G-Cter in SUMO2) cross-link involves residue lysine 374.

As to quaternary structure, interacts with SPIN1, SPIN2A, SPIN2B, SPIN3 and SPIN4. Interacts with TCF7L2 in a SPIN1-dependent manner. Interacts with PARP1; promoting PARP1 ADP-ribosyltransferase activity.

It is found in the nucleus. Its subcellular location is the chromosome. In terms of biological role, chromatin protein that stabilizes SPIN1 and enhances its association with histone H3 trimethylated at both 'Lys-4' and 'Lys-9' (H3K4me3K9me3). Positively regulates poly-ADP-ribosylation in response to DNA damage; acts by facilitating PARP1 ADP-ribosyltransferase activity. The sequence is that of Spindlin interactor and repressor of chromatin-binding protein from Homo sapiens (Human).